The chain runs to 495 residues: Transcription termination/antitermination protein NusA (495 aa).

The S1 motif domain occupies 135-200 (GQIITGIVKK…RGAQLFLSRS (66 aa)). Positions 302–370 (HHTMDIAVDS…KNLNVSEKVI (69 aa)) constitute a KH domain. Repeat copies occupy residues 364 to 414 (NVSE…KNGL) and 439 to 489 (GMNE…RNIC). Positions 364 to 489 (NVSEKVIKTL…LLIMAARNIC (126 aa)) are 2 X 51 AA approximate repeats.

The protein belongs to the NusA family. As to quaternary structure, monomer. Binds directly to the core enzyme of the DNA-dependent RNA polymerase and to nascent RNA.

Its subcellular location is the cytoplasm. In terms of biological role, participates in both transcription termination and antitermination. The protein is Transcription termination/antitermination protein NusA of Buchnera aphidicola subsp. Schizaphis graminum (strain Sg).